An 835-amino-acid chain; its full sequence is Cap-specific mRNA (nucleoside-2'-O-)-methyltransferase 1 (835 aa).

Positions 1-66 (MKRRNDSECT…TEGKQRSSDS (66 aa)) are disordered. A Bipartite nuclear localization signal motif is present at residues 2–19 (KRRNDSECTAPLKKQKKR). 5 positions are modified to phosphoserine: S28, S31, S53, S66, and S91. Residues 57-66 (TEGKQRSSDS) are compositionally biased toward basic and acidic residues. A G-patch domain is found at 87-133 (YNSVSQKLMAKMGFKEGEGLGKYSQGRKDIVEASNQKGRRGLGLTLQ). K108 carries the post-translational modification N6-acetyllysine. Substrate contacts are provided by residues 203–207 (KSVFD) and R218. The RrmJ-type SAM-dependent 2'-O-MTase domain occupies 231 to 450 (FFLNRAAMKM…ERYVVCKGLK (220 aa)). Position 234 (N234) interacts with S-adenosyl-L-methionine. Residue K239 is part of the active site. S-adenosyl-L-methionine-binding positions include 277–283 (CAGPGGF) and 335–336 (DI). D364 is an active-site residue. 374 to 376 (NLQ) contacts substrate. K404 (proton acceptor) is an active-site residue. N439 contributes to the substrate binding site. The segment at 727 to 835 (SSGTPKLSYT…VLSFIQTHSA (109 aa)) is interaction with POLR2A. Positions 752 to 786 (RTVNEPWTMGFSKSFKRKFFYNKKTKNSTFDLPAD) constitute a WW domain.

In terms of assembly, interacts with POLR2A (via C-terminus).

It is found in the nucleus. The enzyme catalyses a 5'-end (N(7)-methyl 5'-triphosphoguanosine)-ribonucleoside in mRNA + S-adenosyl-L-methionine = a 5'-end (N(7)-methyl 5'-triphosphoguanosine)-(2'-O-methyl-ribonucleoside) in mRNA + S-adenosyl-L-homocysteine + H(+). In terms of biological role, S-adenosyl-L-methionine-dependent methyltransferase that mediates mRNA cap1 2'-O-ribose methylation to the 5'-cap structure of mRNAs. Methylates the ribose of the first nucleotide of a m(7)GpppG-capped mRNA and small nuclear RNA (snRNA) to produce m(7)GpppRm (cap1). Displays a preference for cap0 transcripts. Cap1 modification is linked to higher levels of translation. May be involved in the interferon response pathway. The chain is Cap-specific mRNA (nucleoside-2'-O-)-methyltransferase 1 (CMTR1) from Bos taurus (Bovine).